A 269-amino-acid chain; its full sequence is Zinc transporter ZupT (269 aa).

8 helical membrane passes run 11 to 31 (IALAVTLAAGLATAIGSLLVL), 40 to 60 (LLAFGLAFAGGAMVYVSLSEI), 80 to 100 (YGTLAFLLGVIVIVLIDHFIP), 125 to 145 (ALLTSIAITAHNFPEGLATFF), 158 to 178 (AFAIAIHNIPEGIAIAVPVYF), 187 to 207 (FSASLLSGLAEPVGAALGYWL), 217 to 237 (FGWVFGLIAGVMVFLALDELL), and 249 to 269 (TVYGLVAGMGTLAISLVLFKW). Fe(2+) contacts are provided by Asn136 and Glu139. 2 residues coordinate Zn(2+): Glu139 and His164. Positions 165, 168, and 197 each coordinate Fe(2+). Zn(2+) is bound at residue Glu168.

Belongs to the ZIP transporter (TC 2.A.5) family. ZupT subfamily.

The protein resides in the cell inner membrane. The catalysed reaction is Zn(2+)(in) = Zn(2+)(out). Its function is as follows. Mediates zinc uptake. May also transport other divalent cations. In Stenotrophomonas maltophilia (strain R551-3), this protein is Zinc transporter ZupT.